A 96-amino-acid polypeptide reads, in one-letter code: RNA-binding protein Hfq (96 aa).

One can recognise a Sm domain in the interval 9–68 (DPYLNALRRERIPVSIYLVNGIKLQGQIESFDQFVILLKNTVNQMVYKHAISTVVPARSV). Residues 67 to 96 (SVSHHNNSNNSNQQNYQQEQQTDSNVEKAE) are disordered. Positions 72-87 (NNSNNSNQQNYQQEQQ) are enriched in low complexity.

It belongs to the Hfq family. Homohexamer.

RNA chaperone that binds small regulatory RNA (sRNAs) and mRNAs to facilitate mRNA translational regulation in response to envelope stress, environmental stress and changes in metabolite concentrations. Also binds with high specificity to tRNAs. The protein is RNA-binding protein Hfq of Pasteurella multocida (strain Pm70).